A 916-amino-acid chain; its full sequence is Oxoglutarate dehydrogenase (916 aa).

This sequence belongs to the alpha-ketoglutarate dehydrogenase family. Homodimer. Part of the 2-oxoglutarate dehydrogenase (OGDH) complex composed of E1 (2-oxoglutarate dehydrogenase), E2 (dihydrolipoamide succinyltransferase) and E3 (dihydrolipoamide dehydrogenase); the complex contains multiple copies of the three enzymatic components (E1, E2 and E3). Thiamine diphosphate serves as cofactor.

It carries out the reaction N(6)-[(R)-lipoyl]-L-lysyl-[protein] + 2-oxoglutarate + H(+) = N(6)-[(R)-S(8)-succinyldihydrolipoyl]-L-lysyl-[protein] + CO2. E1 component of the 2-oxoglutarate dehydrogenase (OGDH) complex which catalyzes the decarboxylation of 2-oxoglutarate, the first step in the conversion of 2-oxoglutarate to succinyl-CoA and CO(2). This is Oxoglutarate dehydrogenase (sucA) from Buchnera aphidicola subsp. Baizongia pistaciae (strain Bp).